A 123-amino-acid chain; its full sequence is UPF0102 protein PSPPH_4120 (123 aa).

This sequence belongs to the UPF0102 family.

This is UPF0102 protein PSPPH_4120 from Pseudomonas savastanoi pv. phaseolicola (strain 1448A / Race 6) (Pseudomonas syringae pv. phaseolicola (strain 1448A / Race 6)).